A 166-amino-acid polypeptide reads, in one-letter code: MSGIAAGRLAEERKHWRKDHPFGFIAKPVKNADGTLNLFNWECAIPGRKDTIWEGGLYRIRMLFKDDFPSTPPKCKFEPPLFHPNVYPSGTVCLSLLDENKDWKPSISIKQLLIGIQDLLNHPNIEDPAQAEAYQIYCQNRAEYEKRVKKEAVKYAAELVQKQMLE.

A UBC core domain is found at 4–157 (IAAGRLAEER…VKKEAVKYAA (154 aa)). Cys93 (glycyl thioester intermediate) is an active-site residue.

Belongs to the ubiquitin-conjugating enzyme family. As to quaternary structure, interacts with brd-1 and rad-51. Interacts with smo-1 and sop-2. Interacts with bet-1 (via BROMO domain 2). Interacts with isoforms 1 and 2 of X-box-binding protein xbp-1.

It localises to the nucleus envelope. It functions in the pathway protein modification; protein sumoylation. Functionally, accepts the ubiquitin-like protein smo-1 from the aos-1-uba-2 E1 complex and catalyzes its covalent attachment to other proteins with the help of an E3 ligase such as gei-17. Required to sumoylate the ETS transcription factor lin-1, Polycomb protein sop-2, and intermediate filament proteins, such as ifb-1. Required for embryonic development, fertility, vulval morphogenesis, inhibition of vulval cell fates, lifespan, and neuromuscular activity. This chain is SUMO-conjugating enzyme UBC9, found in Caenorhabditis elegans.